A 244-amino-acid polypeptide reads, in one-letter code: uncharacterized protein (244 aa).

A run of 6 helical transmembrane segments spans residues 21–41 (FPYS…YGIY), 44–64 (ALGF…AGSV), 66–86 (FIAA…LITL), 139–159 (WYMF…AAMG), 165–185 (VLPF…LVIF), and 199–219 (LLGL…YFLI).

This sequence belongs to the AzlC family.

Its subcellular location is the cell membrane. This is an uncharacterized protein from Haemophilus influenzae (strain ATCC 51907 / DSM 11121 / KW20 / Rd).